The primary structure comprises 245 residues: UPF0246 protein CE1889 (245 aa).

Residues 1–20 form a disordered region; sequence MLILLPPSETKTPGGAGAPL.

This sequence belongs to the UPF0246 family.

The protein is UPF0246 protein CE1889 of Corynebacterium efficiens (strain DSM 44549 / YS-314 / AJ 12310 / JCM 11189 / NBRC 100395).